A 475-amino-acid polypeptide reads, in one-letter code: MVRVRLAPSPTGTLHIGTARTAVFNWLYARRHGGEFVLRIEDTDKERSKSEYTSNILDGLKWLGIDWDAEPVIQSERVEQHRQAIQQLLDAGLAYRCYASEEELNAMREAQMANKKAPRYDNRHRNLSHEQEADYQAEGRQATVRFRIDDSRNIQWNDLVRGAMSWSGADLGGDMVIARRAPADQIGDPLYNLVVVVDDAAMAITHVIRGEDHIANTAKQLLLYEALGLPLPEFAHTPLILNQEGRKLSKRDGVTSVSDFRGMGYTASALANYMTLLGWSPPEGMGERFSLAEAAKVFDFQRVNKAGARFDWDKLNWLNGQVLHELGAAELNRKLTPLWQEAGFETSGRSQAWLEQLCELLGPSLTLLADGVEQARPFFETPSLKEDAQQQLQQPGAKEALKALLSSLSDEPLQAEQAKALISDACKAADVKKGVLMKSLRGALMGQLQGPDLMESWLLLNAAGQDRGRISSALG.

Residues 8-18 (PSPTGTLHIGT) carry the 'HIGH' region motif. The 'KMSKS' region motif lies at 247–251 (KLSKR). Lysine 250 serves as a coordination point for ATP.

It belongs to the class-I aminoacyl-tRNA synthetase family. Glutamate--tRNA ligase type 1 subfamily. Monomer.

Its subcellular location is the cytoplasm. It catalyses the reaction tRNA(Glu) + L-glutamate + ATP = L-glutamyl-tRNA(Glu) + AMP + diphosphate. Functionally, catalyzes the attachment of glutamate to tRNA(Glu) in a two-step reaction: glutamate is first activated by ATP to form Glu-AMP and then transferred to the acceptor end of tRNA(Glu). This chain is Glutamate--tRNA ligase, found in Synechococcus sp. (strain RCC307).